The primary structure comprises 295 residues: Acetylglutamate kinase (295 aa).

Substrate contacts are provided by residues Gly-66–Gly-67, Arg-88, and Asn-193.

Belongs to the acetylglutamate kinase family. ArgB subfamily.

It localises to the cytoplasm. It catalyses the reaction N-acetyl-L-glutamate + ATP = N-acetyl-L-glutamyl 5-phosphate + ADP. The protein operates within amino-acid biosynthesis; L-arginine biosynthesis; N(2)-acetyl-L-ornithine from L-glutamate: step 2/4. Functionally, catalyzes the ATP-dependent phosphorylation of N-acetyl-L-glutamate. In Rhizobium rhizogenes (strain K84 / ATCC BAA-868) (Agrobacterium radiobacter), this protein is Acetylglutamate kinase.